The following is a 497-amino-acid chain: Bypass of stop codon protein 6 (497 aa).

The Lumenal segment spans residues 1-72 (MDASSVPPKV…KVKTYPLNYQ (72 aa)). Phosphoserine occurs at positions 37 and 41. N49 carries N-linked (GlcNAc...) asparagine glycosylation. A helical membrane pass occupies residues 73-93 (TVPLVKLQVIACLIMFVVFGM). Residues 94–144 (NDQTVGALLPTLIEYYHISRVDVSNVFIVQLCGYVMASLSKERLNKHFGMR) lie on the Cytoplasmic side of the membrane. Residues 145 to 165 (GGMLLAAGLCIVFLIILATAP) form a helical membrane-spanning segment. Residues 166-167 (SS) are Lumenal-facing. Residues 168-188 (FYVCMFCGLPLGLGIGILDST) traverse the membrane as a helical segment. Over 189–205 (GNVLMGSLLVHKNELMG) the chain is Cytoplasmic. The helical transmembrane segment at 206 to 226 (IMHGLYGAAAMVTPPLVSYFV) threads the bilayer. The Lumenal portion of the chain corresponds to 227-232 (EWGHWS). A helical membrane pass occupies residues 233-253 (LFFLIPLFFSIIGMIVIFPAF). The Cytoplasmic portion of the chain corresponds to 254–300 (KFETASKYDYLCSVENKESNNDVEEAGDNSLMESTKASPGFFELLRN). A helical transmembrane segment spans residues 301 to 321 (PAIFLYSLYLFLYLGAEITTG). Topologically, residues 322–340 (SWFFSYLLETKSSNKVAMS) are lumenal. The chain crosses the membrane as a helical span at residues 341–361 (YIAASFWTGLTVGRLCLGFVT). The Cytoplasmic portion of the chain corresponds to 362 to 373 (ERFFENEYKASK). A helical transmembrane segment spans residues 374-394 (AYAFLTLSSYTLFVLVGLINS). Residues 395–397 (SSV) lie on the Lumenal side of the membrane. The chain crosses the membrane as a helical span at residues 398-418 (FYFVVLFFVVFCCGTFIGPLF). Residues 419–439 (PNASIVALQVLPKRLHVSGVG) lie on the Cytoplasmic side of the membrane. The helical transmembrane segment at 440-460 (VAVAVGGCGGAAIPYLAGVIA) threads the bilayer. The Lumenal portion of the chain corresponds to 461–462 (HT). Residues 463–483 (VGIQYIPLLCWIMVALFTLEW) traverse the membrane as a helical segment. Over 484–497 (TLYPKFIKGHEEYF) the chain is Cytoplasmic.

The protein belongs to the major facilitator superfamily.

It localises to the golgi apparatus. The protein resides in the cis-Golgi network membrane. Its function is as follows. Probable transporter. The sequence is that of Bypass of stop codon protein 6 (BSC6) from Saccharomyces cerevisiae (strain ATCC 204508 / S288c) (Baker's yeast).